The chain runs to 61 residues: Photosystem II reaction center protein Z (61 aa).

The next 2 membrane-spanning stretches (helical) occupy residues leucine 5–alanine 25 and asparagine 38–serine 58.

The protein belongs to the PsbZ family. PSII is composed of 1 copy each of membrane proteins PsbA, PsbB, PsbC, PsbD, PsbE, PsbF, PsbH, PsbI, PsbJ, PsbK, PsbL, PsbM, PsbT, PsbX, PsbY, PsbZ, Psb30/Ycf12, at least 3 peripheral proteins of the oxygen-evolving complex and a large number of cofactors. It forms dimeric complexes.

Its subcellular location is the plastid. It localises to the chloroplast thylakoid membrane. In terms of biological role, may control the interaction of photosystem II (PSII) cores with the light-harvesting antenna, regulates electron flow through the 2 photosystem reaction centers. PSII is a light-driven water plastoquinone oxidoreductase, using light energy to abstract electrons from H(2)O, generating a proton gradient subsequently used for ATP formation. This is Photosystem II reaction center protein Z from Skeletonema costatum (Marine centric diatom).